We begin with the raw amino-acid sequence, 478 residues long: MESKALLLLALSVCLQSLTVSRGGLVAADRITGGKDFRDIESKFALRTPEDTAEDTCHLIPGVTESVANCHFNHSSKTFVVIHGWTVTGMYESWVPKLVAALYKREPDSNVIVVDWLSRAQQHYPVSAGYTKLVGQDVAKFMNWMADEFNYPLGNVHLLGYSLGAHAAGIAGSLTNKKVNRITGLDPAGPNFEYAEAPSRLSPDDADFVDVLHTFTRGSPGRSIGIQKPVGHVDIYPNGGTFQPGCNIGEALRVIAERGLGDVDQLVKCSHERSVHLFIDSLLNEENPSKAYRCNSKEAFEKGLCLSCRKNRCNNMGYEINKVRAKRSSKMYLKTRSQMPYKVFHYQVKIHFSGTESNTYTNQAFEISLYGTVAESENIPFTLPEVSTNKTYSFLLYTEVDIGELLMLKLKWISDSYFSWSNWWSSPGFDIGKIRVKAGETQKKVIFCSREKMSYLQKGKSPVIFVKCHDKSLNRKSG.

The signal sequence occupies residues 1-28; sequence MESKALLLLALSVCLQSLTVSRGGLVAA. Residues 35–56 are interaction with GPIHBP1; the sequence is KDFRDIESKFALRTPEDTAEDT. Cys57 and Cys70 are oxidised to a cystine. Asn73 carries an N-linked (GlcNAc...) asparagine glycan. Position 124 is a 3'-nitrotyrosine (Tyr124). Residue Ser162 is the Nucleophile of the active site. Catalysis depends on Asp186, which acts as the Charge relay system. Tyr194 carries the 3'-nitrotyrosine modification. Ca(2+) is bound by residues Ala197, Arg200, Ser202, and Asp205. Cys246 and Cys269 are oxidised to a cystine. The tract at residues 246–269 is essential for determining substrate specificity; the sequence is CNIGEALRVIAERGLGDVDQLVKC. Catalysis depends on His271, which acts as the Charge relay system. An N-linked (GlcNAc...) asparagine glycan is attached at Asn287. Disulfide bonds link Cys294–Cys313 and Cys305–Cys308. In terms of domain architecture, PLAT spans 344 to 467; the sequence is FHYQVKIHFS…KGKSPVIFVK (124 aa). A 3'-nitrotyrosine modification is found at Tyr346. A glycan (N-linked (GlcNAc...) asparagine) is linked at Asn389. Residues 420 to 424 are important for interaction with lipoprotein particles; it reads WSNWW. Residues 433–437 form an important for heparin binding region; sequence KIRVK. The tract at residues 446–470 is interaction with GPIHBP1; it reads IFCSREKMSYLQKGKSPVIFVKCHD. A disulfide bridge connects residues Cys448 and Cys468.

The protein belongs to the AB hydrolase superfamily. Lipase family. In terms of assembly, homodimer. Interacts with GPIHBP1 with 1:1 stoichiometry. Interacts with APOC2; the interaction activates LPL activity in the presence of lipids. Interaction with heparan sulfate proteoglycans is required to protect LPL against loss of activity. Associates with lipoprotein particles in blood plasma. Interacts with LMF1 and SEL1L; interaction with SEL1L is required to prevent aggregation of newly synthesized LPL in the endoplasmic reticulum (ER), and for normal export of LPL from the ER to the extracellular space. Interacts with SORL1; SORL1 acts as a sorting receptor, promoting LPL localization to endosomes and later to lysosomes, leading to degradation of newly synthesized LPL. In terms of processing, tyrosine nitration after lipopolysaccharide (LPS) challenge down-regulates the lipase activity. In terms of tissue distribution, detected in milk (at protein level).

The protein localises to the cell membrane. Its subcellular location is the secreted. It localises to the extracellular space. The protein resides in the extracellular matrix. The enzyme catalyses a triacylglycerol + H2O = a diacylglycerol + a fatty acid + H(+). The catalysed reaction is a 1,2-diacyl-sn-glycero-3-phosphocholine + H2O = a 2-acyl-sn-glycero-3-phosphocholine + a fatty acid + H(+). It catalyses the reaction 1,2,3-tri-(9Z-octadecenoyl)-glycerol + H2O = di-(9Z)-octadecenoylglycerol + (9Z)-octadecenoate + H(+). It carries out the reaction 1,2-di-(9Z-octadecenoyl)-sn-glycero-3-phosphocholine + H2O = (9Z-octadecenoyl)-sn-glycero-3-phosphocholine + (9Z)-octadecenoate + H(+). The enzyme catalyses 1,2,3-tributanoylglycerol + H2O = dibutanoylglycerol + butanoate + H(+). The catalysed reaction is 1,2-dihexadecanoyl-sn-glycero-3-phosphocholine + H2O = hexadecanoyl-sn-glycero-3-phosphocholine + hexadecanoate + H(+). With respect to regulation, the apolipoprotein APOC2 acts as a coactivator of LPL activity. Ca(2+) binding promotes protein stability and formation of the active homodimer. Interaction with GPIHBP1 protects LPL against inactivation by ANGPTL4. Functionally, key enzyme in triglyceride metabolism. Catalyzes the hydrolysis of triglycerides from circulating chylomicrons and very low density lipoproteins (VLDL), and thereby plays an important role in lipid clearance from the blood stream, lipid utilization and storage. Although it has both phospholipase and triglyceride lipase activities it is primarily a triglyceride lipase with low but detectable phospholipase activity. Mediates margination of triglyceride-rich lipoprotein particles in capillaries. Recruited to its site of action on the luminal surface of vascular endothelium by binding to GPIHBP1 and cell surface heparan sulfate proteoglycans. The chain is Lipoprotein lipase (LPL) from Bos taurus (Bovine).